Consider the following 406-residue polypeptide: 4-hydroxy-3-methylbut-2-en-1-yl diphosphate synthase (flavodoxin) (406 aa).

4 residues coordinate [4Fe-4S] cluster: Cys297, Cys300, Cys343, and Glu350.

Belongs to the IspG family. [4Fe-4S] cluster serves as cofactor.

It catalyses the reaction (2E)-4-hydroxy-3-methylbut-2-enyl diphosphate + oxidized [flavodoxin] + H2O + 2 H(+) = 2-C-methyl-D-erythritol 2,4-cyclic diphosphate + reduced [flavodoxin]. It participates in isoprenoid biosynthesis; isopentenyl diphosphate biosynthesis via DXP pathway; isopentenyl diphosphate from 1-deoxy-D-xylulose 5-phosphate: step 5/6. Converts 2C-methyl-D-erythritol 2,4-cyclodiphosphate (ME-2,4cPP) into 1-hydroxy-2-methyl-2-(E)-butenyl 4-diphosphate. In Thermus thermophilus (strain ATCC 27634 / DSM 579 / HB8), this protein is 4-hydroxy-3-methylbut-2-en-1-yl diphosphate synthase (flavodoxin).